Here is a 361-residue protein sequence, read N- to C-terminus: Glycerophosphodiester phosphodiesterase GDPD1, chloroplastic (361 aa).

The transit peptide at methionine 1–arginine 53 directs the protein to the chloroplast. Residues phenylalanine 54 to valine 323 enclose the GP-PDE domain.

This sequence belongs to the glycerophosphoryl diester phosphodiesterase family. The cofactor is Mg(2+). In terms of tissue distribution, expressed in roots, shoots, rosette leaves, stems, flowers and siliques.

The protein resides in the plastid. It is found in the chloroplast. It carries out the reaction a sn-glycero-3-phosphodiester + H2O = an alcohol + sn-glycerol 3-phosphate + H(+). Functionally, hydrolyzes glycerolphosphoglycerol, glycerophosphocholine and glycerophosphoethanolamine in vitro. May be involved in release of inorganic phosphate (Pi) from phospholipids during Pi starvation. The sequence is that of Glycerophosphodiester phosphodiesterase GDPD1, chloroplastic from Arabidopsis thaliana (Mouse-ear cress).